Here is a 430-residue protein sequence, read N- to C-terminus: Pyrokinin-1 receptor (430 aa).

The Extracellular portion of the chain corresponds to 1–16 (MSAGNMSHDLGPPRDP). N5 is a glycosylation site (N-linked (GlcNAc...) asparagine). A helical membrane pass occupies residues 17–37 (LAIVIPVTVVYSLIFITGVVG). The Cytoplasmic segment spans residues 38–53 (NISTCIVIKKNRSMHT). Residues 54 to 74 (ATNYYLFSLAISDFLLLLSGV) form a helical membrane-spanning segment. The Extracellular portion of the chain corresponds to 75 to 96 (PQEVSYIWSKYPYVFGEYICIG). C94 and C171 are joined by a disulfide. The helical transmembrane segment at 97 to 117 (RGLLAETSANATVLTITAFTV) threads the bilayer. Residues 118–140 (ERYIAICHPFLGQAMSKLSRAIR) are Cytoplasmic-facing. The chain crosses the membrane as a helical span at residues 141 to 161 (IIVLVWIMAIVTAIPQAAQFG). Topologically, residues 162-185 (IEHYSGVEQCGIVRVIVKHSFQLS) are extracellular. A helical transmembrane segment spans residues 186-206 (TFIFFLAPMSIILVLYLLIGV). Topologically, residues 207–281 (HLYRSTLVEG…GRLNHYGTRR (75 aa)) are cytoplasmic. Residues 282–302 (VLRMLVAVVVCFFLCWAPFHA) traverse the membrane as a helical segment. Topologically, residues 303–321 (QRLIAIYAPARGAKLRDQH) are extracellular. A helical membrane pass occupies residues 322–342 (EFVYTVMTYVSGVLYYLSTCI). Residues 343 to 430 (NPLLYNIMSH…QYAMIGVQVN (88 aa)) lie on the Cytoplasmic side of the membrane. Positions 388–397 (TNSSQTQRFS) are enriched in polar residues. The segment at 388–413 (TNSSQTQRFSIESAEQPKPSIMQNPT) is disordered.

Belongs to the G-protein coupled receptor 1 family.

The protein resides in the cell membrane. In terms of biological role, receptor for the neuropeptide CAP-3/pyrokinin-1 (TGPSASSGLWFGPRL-amide). Also activated weakly by other neuropeptides terminating in the sequence PRL-amide including pyrokinin-2, Hug-gamma, and ecdysis-triggering-hormone-1. The activity of this receptor is mediated by G proteins which activate a phosphatidyl-inositol-calcium second messenger system. The protein is Pyrokinin-1 receptor of Drosophila melanogaster (Fruit fly).